Reading from the N-terminus, the 216-residue chain is tRNA (guanine-N(7)-)-methyltransferase (216 aa).

Positions 44, 69, 97, and 119 each coordinate S-adenosyl-L-methionine. Asp-119 is an active-site residue. Substrate is bound by residues Lys-123, Asp-155, and 192–195 (TEYE).

Belongs to the class I-like SAM-binding methyltransferase superfamily. TrmB family.

The enzyme catalyses guanosine(46) in tRNA + S-adenosyl-L-methionine = N(7)-methylguanosine(46) in tRNA + S-adenosyl-L-homocysteine. The protein operates within tRNA modification; N(7)-methylguanine-tRNA biosynthesis. Functionally, catalyzes the formation of N(7)-methylguanine at position 46 (m7G46) in tRNA. This Lysinibacillus sphaericus (strain C3-41) protein is tRNA (guanine-N(7)-)-methyltransferase.